The chain runs to 310 residues: Protein CUP-SHAPED COTYLEDON 1 (310 aa).

Positions 20–172 constitute an NAC domain; sequence MPPGFRFHPT…EWVLCKVCLK (153 aa). Residues 119 to 178 mediate DNA binding; that stretch reads LGMKKTLVFYKGRAPKGEKSCWVMHEYRLDGKFSYHYISSSAKDEWVLCKVCLKSGVVSR. Involved in transactivation activity regions lie at residues 179–210 and 306–310; these read ETNL…NTFA and WPFTL.

In terms of tissue distribution, expressed in inflorescence stems, rosette leaves, aerial parts of seedlings, flowers, floral buds and roots.

Its subcellular location is the nucleus. In terms of biological role, transcription activator of STM and KNAT6. Involved in molecular mechanisms regulating shoot apical meristem (SAM) formation during embryogenesis and organ separation. Required for the fusion of septa of gynoecia along the length of the ovaries. Activates the shoot formation in callus in a STM-dependent manner. Seems to act as an inhibitor of cell division. The chain is Protein CUP-SHAPED COTYLEDON 1 (NAC054) from Arabidopsis thaliana (Mouse-ear cress).